We begin with the raw amino-acid sequence, 119 residues long: C-C motif chemokine 24 (119 aa).

The first 26 residues, 1–26, serve as a signal peptide directing secretion; the sequence is MAGLATFVVSLLLVTLCAHCIDPAGS. 2 disulfides stabilise this stretch: cysteine 33-cysteine 58 and cysteine 34-cysteine 74. 2 N-linked (GlcNAc...) asparagine glycosylation sites follow: asparagine 54 and asparagine 115.

The protein belongs to the intercrine beta (chemokine CC) family.

The protein localises to the secreted. Its function is as follows. Chemotactic for resting T-lymphocytes, and eosinophils. Has lower chemotactic activity for neutrophils but none for monocytes and activated lymphocytes. Is a strong suppressor of colony formation by a multipotential hematopoietic progenitor cell line. Binds to CCR3. This is C-C motif chemokine 24 from Canis lupus familiaris (Dog).